The chain runs to 1761 residues: Nonribosomal peptide synthetase 6 (1761 aa).

The interval glutamate 63 to arginine 468 is adenylation. Residues glutamate 600–serine 675 enclose the Carrier 1 domain. Serine 636 bears the O-(pantetheine 4'-phosphoryl)serine mark. Residues valine 712–aspartate 1135 are condensation 1. Carrier domains lie at serine 1169–arginine 1242 and serine 1237–threonine 1313. O-(pantetheine 4'-phosphoryl)serine is present on residues serine 1203 and serine 1274. A condensation 2 region spans residues isoleucine 1354–valine 1677.

This sequence belongs to the NRP synthetase family.

It participates in siderophore biosynthesis. In terms of biological role, nonribosomal peptide synthetase; part of the gene cluster that mediates the biosynthesis of hydroxamate-containing siderophores that play a critical role in virulence. Cochliobolus heterostrophus produces extracellular coprogen-type siderophores including coprogen, neocoprogen I and neocoprogen II, as well as the intracellular siderophore ferricrocin. The role of extracellular siderophores is to supply iron to the fungus during plant infection, and the intracellular ferricrocin is required for intracellular iron distribution and storage with a crucial role in ascus and ascospore development. SIDA2 catalyzes the conversion of L-ornithine to N(5)-hydroxyornithine, the first step in the biosynthesis of all hydroxamate-containing siderophores. The assembly of extracellular coprogen-type siderophores is then performed by the nonribosomal peptide synthetase (NRPS) NPS6 whereas the intracellular siderophore ferricrocin is assembled by NPS2. The sequence is that of Nonribosomal peptide synthetase 6 from Cochliobolus heterostrophus (strain C4 / ATCC 48331 / race T) (Southern corn leaf blight fungus).